The primary structure comprises 362 residues: Very-long-chain (3R)-3-hydroxyacyl-CoA dehydratase 3 (362 aa).

An N-acetylmethionine modification is found at Met-1. At 1-149 (MENQVLTPHV…ETLTSLKKGY (149 aa)) the chain is on the cytoplasmic side. The 90-residue stretch at 5–94 (VLTPHVYWAQ…KESQWWERLT (90 aa)) folds into the CS domain. Residue Thr-7 is modified to Phosphothreonine. A coiled-coil region spans residues 111-136 (LDESDAEMELRAKEEEQLNKLRLESQ). Phosphoserine is present on residues Ser-114 and Ser-135. The helical transmembrane segment at 150–170 (LFMYNLVQFLGFSWIFVNMTV) threads the bilayer. Over 171–189 (RFFILGKESFYDTFHTVAD) the chain is Lumenal. A helical transmembrane segment spans residues 190–210 (MMYFCQMLAAVESINAAIGVT). Over 211–212 (KS) the chain is Cytoplasmic. The chain crosses the membrane as a helical span at residues 213 to 233 (PVVPSLFQLLGRNFILFIIFG). The Lumenal portion of the chain corresponds to 234–242 (TMEEMQNKA). The chain crosses the membrane as a helical span at residues 243-263 (VVFFVFYIWSTVEIFRYPFYM). Over 264 to 280 (LSCIDMDWKVLTWLRYT) the chain is Cytoplasmic. A helical transmembrane segment spans residues 281 to 301 (VWIPLYPMGCLAEAVSVIQSI). Active-site residues include Tyr-286 and Glu-293. Topologically, residues 302 to 325 (PVFNETGRFSFTLPYPVKIKVRFS) are lumenal. The helical transmembrane segment at 326 to 346 (FFLQIYLILLFLGLYVNFRYL) threads the bilayer. The Cytoplasmic segment spans residues 347-362 (YKQRRRRFGQKKKKIH).

It belongs to the very long-chain fatty acids dehydratase HACD family. May interact with enzymes of the ELO family (including ELOVL1); with those enzymes that mediate condensation, the first of the four steps of the reaction cycle responsible for fatty acids elongation, may be part of a larger fatty acids elongase complex. Interacts with RAC1. Associates with internalized insulin receptor/INSR complexes on Golgi/endosomal membranes; HACD3/PTPLAD1 together with ATIC and PRKAA2/AMPK2 is proposed to be part of a signaling network regulating INSR autophosphorylation and endocytosis.

It localises to the endoplasmic reticulum membrane. The enzyme catalyses a very-long-chain (3R)-3-hydroxyacyl-CoA = a very-long-chain (2E)-enoyl-CoA + H2O. It carries out the reaction (3R)-hydroxyhexadecanoyl-CoA = (2E)-hexadecenoyl-CoA + H2O. Its pathway is lipid metabolism; fatty acid biosynthesis. In terms of biological role, catalyzes the third of the four reactions of the long-chain fatty acids elongation cycle. This endoplasmic reticulum-bound enzymatic process, allows the addition of two carbons to the chain of long- and very long-chain fatty acids/VLCFAs per cycle. This enzyme catalyzes the dehydration of the 3-hydroxyacyl-CoA intermediate into trans-2,3-enoyl-CoA, within each cycle of fatty acid elongation. Thereby, it participates in the production of VLCFAs of different chain lengths that are involved in multiple biological processes as precursors of membrane lipids and lipid mediators. Involved in Rac1-signaling pathways leading to the modulation of gene expression. Promotes insulin receptor/INSR autophosphorylation and is involved in INSR internalization. The chain is Very-long-chain (3R)-3-hydroxyacyl-CoA dehydratase 3 from Bos taurus (Bovine).